The following is a 33-amino-acid chain: Mu-theraphotoxin-Ssp1a (33 aa).

3 disulfides stabilise this stretch: Cys2/Cys17, Cys9/Cys22, and Cys16/Cys29. Residue Leu33 is modified to Leucine amide.

It belongs to the neurotoxin 10 (Hwtx-1) family. 22 (Htx-4) subfamily. As to expression, expressed by the venom gland.

Its subcellular location is the secreted. In terms of biological role, gating modifier toxin that traps voltage-sensing domain II of voltage-gated sodium channels in the resting state without significantly altering the voltage-dependence of activation and inactivation, or delay in recovery from inactivation. Inhibits hNav1.7/SCN9A (IC(50)=134 nM), followed in rank order of potency by Nav1.6/SCN8A (IC(50)=191 nM), Nav1.2/SCN2A (IC(50)=239 nM), Nav1.3/SCN3A (IC(50)=547 nM) and Nav1.1/SCN1A (IC(50)=674 nM). Its binding to Nav1.2, Nav1.3 and Nav1.7 is slowly reversible and incomplete, with ~25% of Nav1.2, ~50% of Nav1.3 and ~40% of Nav1.7 channels recovering from block after a 30 minutes washout, respectively. Binds in the aqueous cleft formed between the S1-S2 and S3-S4 loops of each channel subtype, primarily targeting the S3-S4 loop. In Selenotypus sp. (Feather-legged tarantula), this protein is Mu-theraphotoxin-Ssp1a.